The following is a 483-amino-acid chain: Uridine/cytidine kinase UKL1, chloroplastic (483 aa).

The N-terminal 47 residues, Met-1–Asn-47, are a transit peptide targeting the chloroplast. The uridine kinase stretch occupies residues Pro-59–Gly-264. The tract at residues Asn-274–Glu-483 is uracil phosphoribosyltransferase. GTP contacts are provided by residues Lys-298, Arg-307, and Cys-341–Leu-344. Residues Arg-351 and Arg-376 each coordinate 5-phospho-alpha-D-ribose 1-diphosphate. Position 396 (Arg-396) interacts with GTP. 5-phospho-alpha-D-ribose 1-diphosphate contacts are provided by residues Asp-402, Thr-407–Ser-410, and Glu-473. Gly-472–Phe-474 serves as a coordination point for uracil.

It in the N-terminal section; belongs to the uridine kinase family. The protein in the C-terminal section; belongs to the UPRTase family.

It is found in the plastid. It localises to the chloroplast. It carries out the reaction cytidine + ATP = CMP + ADP + H(+). The enzyme catalyses uridine + ATP = UMP + ADP + H(+). The protein operates within pyrimidine metabolism; CTP biosynthesis via salvage pathway; CTP from cytidine: step 1/3. Its pathway is pyrimidine metabolism; UMP biosynthesis via salvage pathway; UMP from uridine: step 1/1. Involved in the pyrimidine salvage pathway. Phosphorylates uridine to uridine monophosphate (UMP). Phosphorylates cytidine to cytidine monophosphate (CMP). Does not possess uracil phosphoribosyltransferase (UPRTase) activity that catalyzes the conversion of uracil and 5-phospho-alpha-D-ribose 1-diphosphate (PRPP) to UMP and diphosphate. In Arabidopsis thaliana (Mouse-ear cress), this protein is Uridine/cytidine kinase UKL1, chloroplastic.